The following is a 937-amino-acid chain: Protein translocase subunit SecA (937 aa).

Residues glutamine 86, 104-108 (GEGKT), and aspartate 493 contribute to the ATP site. The interval 868 to 889 (LERPSQPTKLAYSAPSEDGDAE) is disordered. 4 residues coordinate Zn(2+): cysteine 911, cysteine 913, cysteine 922, and histidine 923. Positions 915 to 937 (SGKKFKQCHGRPGGPTGLTARVS) are disordered.

The protein belongs to the SecA family. Monomer and homodimer. Part of the essential Sec protein translocation apparatus which comprises SecA, SecYEG and auxiliary proteins SecDF. Other proteins may also be involved. The cofactor is Zn(2+).

Its subcellular location is the cell membrane. The protein resides in the cytoplasm. It carries out the reaction ATP + H2O + cellular proteinSide 1 = ADP + phosphate + cellular proteinSide 2.. Functionally, part of the Sec protein translocase complex. Interacts with the SecYEG preprotein conducting channel. Has a central role in coupling the hydrolysis of ATP to the transfer of proteins into and across the cell membrane, serving as an ATP-driven molecular motor driving the stepwise translocation of polypeptide chains across the membrane. In Nocardioides sp. (strain ATCC BAA-499 / JS614), this protein is Protein translocase subunit SecA.